Reading from the N-terminus, the 501-residue chain is Aldehyde dehydrogenase 1A1 (501 aa).

Position 2 is an N-acetylserine (Ser-2). Lys-91 and Lys-128 each carry N6-acetyllysine. NAD(+) is bound by residues 167 to 170 (LPWN), 193 to 196 (KPAE), 226 to 227 (GP), and 246 to 247 (GS). N6-acetyllysine is present on Lys-252. Glu-269 acts as the Proton acceptor in catalysis. 269 to 271 (ELG) contributes to the NAD(+) binding site. The Nucleophile role is filled by Cys-303. Positions 336–501 (LTPGVSQGPQ…VTVKISQKNS (166 aa)) are mediates interaction with PRMT3. At Thr-337 the chain carries Phosphothreonine. 349–353 (EQYDK) contacts NAD(+). Lys-353 and Lys-367 each carry N6-acetyllysine. 400 to 402 (EIF) provides a ligand contact to NAD(+). Lys-410 carries the N6-acetyllysine modification. Ser-413 carries the phosphoserine modification. Residues Lys-419, Lys-435, and Lys-495 each carry the N6-acetyllysine modification.

The protein belongs to the aldehyde dehydrogenase family. In terms of assembly, homotetramer. Interacts with PRMT3; the interaction is direct, inhibits ALDH1A1 aldehyde dehydrogenase activity and is independent of the methyltransferase activity of PRMT3. In terms of processing, the N-terminus is blocked most probably by acetylation.

It localises to the cytoplasm. Its subcellular location is the cytosol. It is found in the cell projection. The protein resides in the axon. It carries out the reaction an aldehyde + NAD(+) + H2O = a carboxylate + NADH + 2 H(+). It catalyses the reaction all-trans-retinal + NAD(+) + H2O = all-trans-retinoate + NADH + 2 H(+). The catalysed reaction is 9-cis-retinal + NAD(+) + H2O = 9-cis-retinoate + NADH + 2 H(+). The enzyme catalyses 11-cis-retinal + NAD(+) + H2O = 11-cis-retinoate + NADH + 2 H(+). It carries out the reaction 13-cis-retinal + NAD(+) + H2O = 13-cis-retinoate + NADH + 2 H(+). It catalyses the reaction 3-deoxyglucosone + NAD(+) + H2O = 2-dehydro-3-deoxy-D-gluconate + NADH + 2 H(+). The catalysed reaction is (E)-4-hydroxynon-2-enal + NAD(+) + H2O = (E)-4-hydroxynon-2-enoate + NADH + 2 H(+). The enzyme catalyses malonaldehyde + NAD(+) + H2O = 3-oxopropanoate + NADH + 2 H(+). It carries out the reaction hexanal + NAD(+) + H2O = hexanoate + NADH + 2 H(+). It catalyses the reaction propanal + NAD(+) + H2O = propanoate + NADH + 2 H(+). The catalysed reaction is acetaldehyde + NAD(+) + H2O = acetate + NADH + 2 H(+). The enzyme catalyses benzaldehyde + NAD(+) + H2O = benzoate + NADH + 2 H(+). It carries out the reaction 4-aminobutanal + NAD(+) + H2O = 4-aminobutanoate + NADH + 2 H(+). It functions in the pathway cofactor metabolism; retinol metabolism. Its function is as follows. Cytosolic dehydrogenase that catalyzes the irreversible oxidation of a wide range of aldehydes to their corresponding carboxylic acid. Functions downstream of retinol dehydrogenases and catalyzes the oxidation of retinaldehyde into retinoic acid, the second step in the oxidation of retinol/vitamin A into retinoic acid. This pathway is crucial to control the levels of retinol and retinoic acid, two important molecules which excess can be teratogenic and cytotoxic. Also oxidizes aldehydes resulting from lipid peroxidation like (E)-4-hydroxynon-2-enal/HNE, malonaldehyde and hexanal that form protein adducts and are highly cytotoxic. By participating for instance to the clearance of (E)-4-hydroxynon-2-enal/HNE in the lens epithelium prevents the formation of HNE-protein adducts and lens opacification. Also functions downstream of fructosamine-3-kinase in the fructosamine degradation pathway by catalyzing the oxidation of 3-deoxyglucosone, the carbohydrate product of fructosamine 3-phosphate decomposition, which is itself a potent glycating agent that may react with lysine and arginine side-chains of proteins. Also has an aminobutyraldehyde dehydrogenase activity and is probably part of an alternative pathway for the biosynthesis of GABA/4-aminobutanoate in midbrain, thereby playing a role in GABAergic synaptic transmission. This Equus caballus (Horse) protein is Aldehyde dehydrogenase 1A1.